The primary structure comprises 148 residues: MPLSGEYAPSPLDWSREQADTYMKSGGTEGTQLQGKPVILLTTVGAKTGKLRKTPLMRVEHDGQYAIVASLGGAPKNPVWYHNVVKNPRVELQDGTVTGDYDAREVFGDEKAIWWQRAVAVWPDYASYQTKTDRQIPVFVLTPVRAGG.

Coenzyme F420-(gamma-Glu)n is bound by residues 46–48 (AKT), 52–57 (RKTPLM), 68–71 (VASL), 79–83 (VWYHN), and Tyr125.

Belongs to the F420H(2)-dependent quinone reductase family.

The protein localises to the cell membrane. It carries out the reaction oxidized coenzyme F420-(gamma-L-Glu)(n) + a quinol + H(+) = reduced coenzyme F420-(gamma-L-Glu)(n) + a quinone. Its function is as follows. Involved in a F420-dependent anti-oxidant mechanism that protects M.tuberculosis against oxidative stress and bactericidal agents. Catalyzes the F420H(2)-dependent two-electron reduction of quinones to dihydroquinones, thereby preventing the formation of cytotoxic semiquinones obtained by the one-electron reduction pathway. In vitro, catalyzes the reduction of menadione to menadiol; since menaquinone is the sole quinone electron carrier in the respiratory chain in M.tuberculosis, the physiological electron acceptor for Fqr-mediated F420H(2) oxidation is therefore likely to be the endogenous menaquinone found in the membrane fraction of M.tuberculosis. The polypeptide is F420H(2)-dependent quinone reductase MT1609 (Mycobacterium tuberculosis (strain CDC 1551 / Oshkosh)).